The primary structure comprises 269 residues: Formamidopyrimidine-DNA glycosylase (269 aa).

Pro2 serves as the catalytic Schiff-base intermediate with DNA. The active-site Proton donor is Glu3. Residue Lys57 is the Proton donor; for beta-elimination activity of the active site. Residues His90, Arg109, and Lys150 each coordinate DNA. Residues 235 to 269 (RVYGRNGEPCRTCGTPIETAKHGQRSTFFCRRCQV) form an FPG-type zinc finger. Arg259 serves as the catalytic Proton donor; for delta-elimination activity.

The protein belongs to the FPG family. In terms of assembly, monomer. It depends on Zn(2+) as a cofactor.

The catalysed reaction is Hydrolysis of DNA containing ring-opened 7-methylguanine residues, releasing 2,6-diamino-4-hydroxy-5-(N-methyl)formamidopyrimidine.. It carries out the reaction 2'-deoxyribonucleotide-(2'-deoxyribose 5'-phosphate)-2'-deoxyribonucleotide-DNA = a 3'-end 2'-deoxyribonucleotide-(2,3-dehydro-2,3-deoxyribose 5'-phosphate)-DNA + a 5'-end 5'-phospho-2'-deoxyribonucleoside-DNA + H(+). Involved in base excision repair of DNA damaged by oxidation or by mutagenic agents. Acts as a DNA glycosylase that recognizes and removes damaged bases. Has a preference for oxidized purines, such as 7,8-dihydro-8-oxoguanine (8-oxoG). Has AP (apurinic/apyrimidinic) lyase activity and introduces nicks in the DNA strand. Cleaves the DNA backbone by beta-delta elimination to generate a single-strand break at the site of the removed base with both 3'- and 5'-phosphates. The sequence is that of Formamidopyrimidine-DNA glycosylase from Pectobacterium atrosepticum (strain SCRI 1043 / ATCC BAA-672) (Erwinia carotovora subsp. atroseptica).